The sequence spans 459 residues: Bifunctional protein GlmU (459 aa).

Positions 1–230 are pyrophosphorylase; that stretch reads MSNRFAVILA…FDETLGVNDR (230 aa). Residues 9-12, Lys23, Gln73, and 78-79 contribute to the UDP-N-acetyl-alpha-D-glucosamine site; these read LAAG and GT. Asp103 is a binding site for Mg(2+). The UDP-N-acetyl-alpha-D-glucosamine site is built by Gly140, Glu155, Asn170, and Asn228. Asn228 lines the Mg(2+) pocket. The linker stretch occupies residues 231-251; that stretch reads VALSQAEVIMKNRINHKNMVN. Residues 252 to 459 are N-acetyltransferase; it reads GVTIIDPSNT…VDQLLNKKKS (208 aa). Residues Arg333 and Lys351 each coordinate UDP-N-acetyl-alpha-D-glucosamine. His363 (proton acceptor) is an active-site residue. UDP-N-acetyl-alpha-D-glucosamine contacts are provided by Tyr366 and Asn377. Residues 386 to 387, Ala423, and Arg440 each bind acetyl-CoA; that span reads NY.

In the N-terminal section; belongs to the N-acetylglucosamine-1-phosphate uridyltransferase family. The protein in the C-terminal section; belongs to the transferase hexapeptide repeat family. Homotrimer. Mg(2+) serves as cofactor.

The protein localises to the cytoplasm. The catalysed reaction is alpha-D-glucosamine 1-phosphate + acetyl-CoA = N-acetyl-alpha-D-glucosamine 1-phosphate + CoA + H(+). It catalyses the reaction N-acetyl-alpha-D-glucosamine 1-phosphate + UTP + H(+) = UDP-N-acetyl-alpha-D-glucosamine + diphosphate. It participates in nucleotide-sugar biosynthesis; UDP-N-acetyl-alpha-D-glucosamine biosynthesis; N-acetyl-alpha-D-glucosamine 1-phosphate from alpha-D-glucosamine 6-phosphate (route II): step 2/2. Its pathway is nucleotide-sugar biosynthesis; UDP-N-acetyl-alpha-D-glucosamine biosynthesis; UDP-N-acetyl-alpha-D-glucosamine from N-acetyl-alpha-D-glucosamine 1-phosphate: step 1/1. The protein operates within bacterial outer membrane biogenesis; LPS lipid A biosynthesis. Its function is as follows. Catalyzes the last two sequential reactions in the de novo biosynthetic pathway for UDP-N-acetylglucosamine (UDP-GlcNAc). The C-terminal domain catalyzes the transfer of acetyl group from acetyl coenzyme A to glucosamine-1-phosphate (GlcN-1-P) to produce N-acetylglucosamine-1-phosphate (GlcNAc-1-P), which is converted into UDP-GlcNAc by the transfer of uridine 5-monophosphate (from uridine 5-triphosphate), a reaction catalyzed by the N-terminal domain. In Bacillus cytotoxicus (strain DSM 22905 / CIP 110041 / 391-98 / NVH 391-98), this protein is Bifunctional protein GlmU.